Here is a 298-residue protein sequence, read N- to C-terminus: uncharacterized protein (298 aa).

The region spanning 5 to 62 is the HTH lysR-type domain; it reads TSLSAMRIFEAAARLGSFRAAAEELNLSPSAVSHAIMRLERDLGVALFERTTRSVSLT. The segment at residues 22 to 42 is a DNA-binding region (H-T-H motif); the sequence is FRAAAEELNLSPSAVSHAIMR.

The protein belongs to the LysR transcriptional regulatory family.

This is an uncharacterized protein from Sinorhizobium fredii (strain NBRC 101917 / NGR234).